A 682-amino-acid polypeptide reads, in one-letter code: DNA ligase (682 aa).

NAD(+) contacts are provided by residues 42–46 (DAAYD), 88–89 (SL), and glutamate 121. Lysine 123 (N6-AMP-lysine intermediate) is an active-site residue. NAD(+) contacts are provided by arginine 144, glutamate 180, lysine 291, and lysine 315. Residues cysteine 409, cysteine 412, cysteine 427, and cysteine 433 each coordinate Zn(2+). A BRCT domain is found at 601–682 (AAGGALAGKT…FRSLAGLPPG (82 aa)).

It belongs to the NAD-dependent DNA ligase family. LigA subfamily. The cofactor is Mg(2+). Requires Mn(2+) as cofactor.

It carries out the reaction NAD(+) + (deoxyribonucleotide)n-3'-hydroxyl + 5'-phospho-(deoxyribonucleotide)m = (deoxyribonucleotide)n+m + AMP + beta-nicotinamide D-nucleotide.. Functionally, DNA ligase that catalyzes the formation of phosphodiester linkages between 5'-phosphoryl and 3'-hydroxyl groups in double-stranded DNA using NAD as a coenzyme and as the energy source for the reaction. It is essential for DNA replication and repair of damaged DNA. The protein is DNA ligase of Acidiphilium cryptum (strain JF-5).